The chain runs to 250 residues: Pyrroloquinoline-quinone synthase (250 aa).

It belongs to the PqqC family.

The catalysed reaction is 6-(2-amino-2-carboxyethyl)-7,8-dioxo-1,2,3,4,7,8-hexahydroquinoline-2,4-dicarboxylate + 3 O2 = pyrroloquinoline quinone + 2 H2O2 + 2 H2O + H(+). The protein operates within cofactor biosynthesis; pyrroloquinoline quinone biosynthesis. Its function is as follows. Ring cyclization and eight-electron oxidation of 3a-(2-amino-2-carboxyethyl)-4,5-dioxo-4,5,6,7,8,9-hexahydroquinoline-7,9-dicarboxylic-acid to PQQ. The chain is Pyrroloquinoline-quinone synthase from Xanthomonas campestris pv. campestris (strain 8004).